The chain runs to 279 residues: Shikimate dehydrogenase (NADP(+)) (279 aa).

Residues 17–19 (SLS) and threonine 64 each bind shikimate. The Proton acceptor role is filled by lysine 68. Aspartate 80 contributes to the NADP(+) binding site. Shikimate contacts are provided by asparagine 89 and aspartate 105. NADP(+) is bound by residues 129–133 (GAGGS), 153–158 (NRTAKK), and leucine 221. Residue tyrosine 223 coordinates shikimate. Position 245 (glycine 245) interacts with NADP(+).

It belongs to the shikimate dehydrogenase family. In terms of assembly, homodimer.

It carries out the reaction shikimate + NADP(+) = 3-dehydroshikimate + NADPH + H(+). The protein operates within metabolic intermediate biosynthesis; chorismate biosynthesis; chorismate from D-erythrose 4-phosphate and phosphoenolpyruvate: step 4/7. Functionally, involved in the biosynthesis of the chorismate, which leads to the biosynthesis of aromatic amino acids. Catalyzes the reversible NADPH linked reduction of 3-dehydroshikimate (DHSA) to yield shikimate (SA). This chain is Shikimate dehydrogenase (NADP(+)), found in Idiomarina loihiensis (strain ATCC BAA-735 / DSM 15497 / L2-TR).